The chain runs to 360 residues: Flavin-dependent trigonelline monooxygenase, oxygenase component (360 aa).

Belongs to the bacterial luciferase oxidoreductase family. As to quaternary structure, homodimer. The trigonelline monooxygenase is composed of a reductase component TgnA and an oxygenase component TgnB.

It carries out the reaction N-methylnicotinate + FMNH2 + O2 = (Z)-2-((N-methylformamido)methylene)-5-hydroxybutanolactone + FMN + H(+). The catalysed reaction is N-methylnicotinate + FADH2 + O2 = (Z)-2-((N-methylformamido)methylene)-5-hydroxybutanolactone + FAD + H(+). In terms of biological role, involved in the degradation of the pyridine ring of trigonelline (TG; N-methylnicotinate) into succinate and methylamine as carbon and nitrogen sources, respectively. Catalyzes the insertion of two oxygens, followed by a ring cleavage of trigonelline to yield (Z)-2-((N-methylformamido)methylene)-5-hydroxybutyrolactone (MFMB). It is able to use reduced FMN or FAD. The polypeptide is Flavin-dependent trigonelline monooxygenase, oxygenase component (Acinetobacter baylyi (strain ATCC 33305 / BD413 / ADP1)).